The following is an 826-amino-acid chain: MATTNHVEHELLSKLIDELKVKANADPEADVLAGRLLHRLKAESVTHTVAEYLEVFSDKFYDEEFFQMHRDELETRVSAFAQSPAYERIVSSGYLSALRYYDTYLYVGRSGKQESVQHFYMRLAGFCASTTCLYAGLRAALQRARPEIESDMEVFDYYFEHLTSQTVCCSTPFMRFAGVENSTLASCILTTPDLSSEWDVTQALYRHLGRYLFQRAGVGVGVTGAGQDGKHISLLMRMINSHVEYHNYGCKRPVSVAAYMEPWHSQIFKFLETKLPENHERCPGIFTGLFVPELFFKLFRDTPWSDWYLFDPKDAGDLERLYGEEFEREYYRLVTAGKFCGRVSIKSLMFSIVNCAVKAGSPFILLKEACNAHFWRDLQGEAMNAANLCAEVLQPSRKSVATCNLANICLPRCLVNAPLAVRAQRADTQGDELLLALPRLSVTLPGEGAIGDGFSLARLRDATQCATFVVACSILQGSPTYDSRDMASMGLGVQGLADVFADLGWQYTDPPSRSLNKEIFEHMYFTALCTSSLIGLHTRKIFPGFKQSKYAGGWFHWHDWAGTDLSIPREIWSRLSERIVRDGLFNSQFIALMPTSGCAQVTGCSDAFYPFYANASTKVTNKEEALRPNRSFWRHVRLDDREALNLVGGRVSCLPEALRQRYLRFQTAFDYNQEDLIQMSRDRAPFVDQSQSHSLFLREEDAARASTLANLLVRSYELGLKTIMYYCRIEKAADLGVMECKASAALSVPREEQNERSPAEQMLPRPMEPAQVTGPVDIMSKGPGEGPGGWCVPGGLEVCYKYRQLFSEDDLLETDGFTERACESCQ.

Substrate is bound by residues Thr-171, 186–187 (SC), Gly-217, 387–391 (NLCAE), and 594–598 (PTSGC). Cys-187 and Cys-403 are joined by a disulfide. Asn-387 acts as the Proton acceptor in catalysis. Cys-389 serves as the catalytic Cysteine radical intermediate. Residue Glu-391 is the Proton acceptor of the active site.

Belongs to the ribonucleoside diphosphate reductase large chain family. Heterotetramer composed of a homodimer of the large subunit (R1) and a homodimer of the small subunit (R2). Larger multisubunit protein complex are also active, composed of (R1)n(R2)n.

It carries out the reaction a 2'-deoxyribonucleoside 5'-diphosphate + [thioredoxin]-disulfide + H2O = a ribonucleoside 5'-diphosphate + [thioredoxin]-dithiol. Its function is as follows. Ribonucleoside-diphosphate reductase holoenzyme provides the precursors necessary for viral DNA synthesis. Allows virus growth in non-dividing cells, as well as reactivation from latency in infected hosts. Catalyzes the biosynthesis of deoxyribonucleotides from the corresponding ribonucleotides. The protein is Ribonucleoside-diphosphate reductase large subunit of Epstein-Barr virus (strain GD1) (HHV-4).